Consider the following 159-residue polypeptide: NADH-quinone oxidoreductase subunit B (159 aa).

[4Fe-4S] cluster is bound by residues cysteine 32, cysteine 33, cysteine 97, and cysteine 126.

Belongs to the complex I 20 kDa subunit family. NDH-1 is composed of 14 different subunits. Subunits NuoB, C, D, E, F, and G constitute the peripheral sector of the complex. [4Fe-4S] cluster serves as cofactor.

It localises to the cell inner membrane. It catalyses the reaction a quinone + NADH + 5 H(+)(in) = a quinol + NAD(+) + 4 H(+)(out). NDH-1 shuttles electrons from NADH, via FMN and iron-sulfur (Fe-S) centers, to quinones in the respiratory chain. The immediate electron acceptor for the enzyme in this species is believed to be ubiquinone. Couples the redox reaction to proton translocation (for every two electrons transferred, four hydrogen ions are translocated across the cytoplasmic membrane), and thus conserves the redox energy in a proton gradient. This is NADH-quinone oxidoreductase subunit B from Helicobacter acinonychis (strain Sheeba).